Consider the following 56-residue polypeptide: uncharacterized protein (56 aa).

This is an uncharacterized protein from Escherichia coli (strain K12).